The following is a 283-amino-acid chain: Bifunctional protein FolD (283 aa).

NADP(+)-binding positions include 165–167 (GAS) and Ser-190.

This sequence belongs to the tetrahydrofolate dehydrogenase/cyclohydrolase family. In terms of assembly, homodimer.

It carries out the reaction (6R)-5,10-methylene-5,6,7,8-tetrahydrofolate + NADP(+) = (6R)-5,10-methenyltetrahydrofolate + NADPH. The catalysed reaction is (6R)-5,10-methenyltetrahydrofolate + H2O = (6R)-10-formyltetrahydrofolate + H(+). Its pathway is one-carbon metabolism; tetrahydrofolate interconversion. Its function is as follows. Catalyzes the oxidation of 5,10-methylenetetrahydrofolate to 5,10-methenyltetrahydrofolate and then the hydrolysis of 5,10-methenyltetrahydrofolate to 10-formyltetrahydrofolate. The sequence is that of Bifunctional protein FolD from Cupriavidus pinatubonensis (strain JMP 134 / LMG 1197) (Cupriavidus necator (strain JMP 134)).